We begin with the raw amino-acid sequence, 336 residues long: tRNA N6-adenosine threonylcarbamoyltransferase (336 aa).

Residues H111, H115, and Y132 each coordinate Fe cation. Residues 132 to 136 (YLSGG), D164, D185, and S264 contribute to the substrate site. D292 is a binding site for Fe cation.

The protein belongs to the KAE1 / TsaD family. Fe(2+) serves as cofactor.

The protein localises to the cytoplasm. It catalyses the reaction L-threonylcarbamoyladenylate + adenosine(37) in tRNA = N(6)-L-threonylcarbamoyladenosine(37) in tRNA + AMP + H(+). In terms of biological role, required for the formation of a threonylcarbamoyl group on adenosine at position 37 (t(6)A37) in tRNAs that read codons beginning with adenine. Is probably involved in the transfer of the threonylcarbamoyl moiety of threonylcarbamoyl-AMP (TC-AMP) to the N6 group of A37. This is tRNA N6-adenosine threonylcarbamoyltransferase from Sulfurisphaera tokodaii (strain DSM 16993 / JCM 10545 / NBRC 100140 / 7) (Sulfolobus tokodaii).